The primary structure comprises 126 residues: Large ribosomal subunit protein bL19 (126 aa).

The protein belongs to the bacterial ribosomal protein bL19 family.

In terms of biological role, this protein is located at the 30S-50S ribosomal subunit interface and may play a role in the structure and function of the aminoacyl-tRNA binding site. In Bradyrhizobium diazoefficiens (strain JCM 10833 / BCRC 13528 / IAM 13628 / NBRC 14792 / USDA 110), this protein is Large ribosomal subunit protein bL19.